Reading from the N-terminus, the 181-residue chain is Transcriptional repressor NrdR (181 aa).

The segment at 3-34 is a zinc-finger region; it reads CLFCQHTYTRVIDSRVSEDGATIRRRRECEAC. In terms of domain architecture, ATP-cone spans 49 to 139; that stretch reads PVIIKKDGGR…VYRSFQDVAD (91 aa).

The protein belongs to the NrdR family. It depends on Zn(2+) as a cofactor.

Its function is as follows. Negatively regulates transcription of bacterial ribonucleotide reductase nrd genes and operons by binding to NrdR-boxes. The sequence is that of Transcriptional repressor NrdR from Xylella fastidiosa (strain 9a5c).